The chain runs to 744 residues: Spalt-like protein sem-4 (744 aa).

Residues 6–32 (AEMAAVSSRRKQSKPRRMSGEGDAMMS) form a disordered region. A compositionally biased stretch (basic residues) spans 13-22 (SRRKQSKPRR). 4 C2H2-type zinc fingers span residues 99–124 (SSCP…LDAH), 305–327 (NQCI…YRTH), 333–355 (FKCK…MGVH), and 411–433 (QQCP…ITEH). A compositionally biased stretch (polar residues) spans 487–497 (KNDSSPNTDTS). 2 disordered regions span residues 487–530 (KNDS…RQDI) and 542–562 (KLEE…PKNE). Residues 499-509 (VEEKITRDDPP) show a composition bias toward basic and acidic residues. The span at 513 to 525 (SLSPSNSSDSSSS) shows a compositional bias: low complexity. Residues 551–561 (QQVSTTPNPKN) show a composition bias toward polar residues. C2H2-type zinc fingers lie at residues 589 to 611 (HQCG…MRTH), 617 to 639 (FKCD…MGTH), and 701 to 723 (TVCS…LKEH). A disordered region spans residues 725–744 (NNGSSAAPTPLASAATPPPS). Residues 728–744 (SSAAPTPLASAATPPPS) are compositionally biased toward low complexity.

This sequence belongs to the sal C2H2-type zinc-finger protein family.

Its subcellular location is the nucleus. Transcription factor, involved in positive and negative modulation of transcription. Binds to multiple DNA sequence motifs in the regulatory elements of target genes, including homeobox selector egl-5 and LIM homeobox mec-3. Involved in cell-fate regulation in multiple lineages, including neuronal, mesodermal and vulval. Required to regulate the fate of PLM touch receptor neurons, acting via negative modulation of transcription of egl-5 and mec-3. May modulate gene expression by interacting with different transcription factors during neuronal and mesodermal cell development. Promotes the proliferative sex myoblast (SM) fate, in a cell autonomous manner, acting via the SoxC transcription factor sem-2. Involved in vulval cell-fate determination, acting by regulating expression of homeobox protein lin-39, and may link lin-39 to incoming signaling pathways. Plays a role in detoxification of reactive oxygen species (ROS), by regulating expression of transcription factor skn-1 and the phase II detoxification genes. This is Spalt-like protein sem-4 from Caenorhabditis elegans.